The chain runs to 195 residues: Cysteine/O-acetylserine efflux protein (195 aa).

Residues 1–9 (MTPILLSAF) are Periplasmic-facing. The helical transmembrane segment at 10-32 (WTYTLITAMTPGPNNILALSSAT) threads the bilayer. The Cytoplasmic segment spans residues 33–46 (SHGFRQSTRVLAGM). A helical membrane pass occupies residues 47–67 (SLGFLIVMLLCAGISFSLAVI). The Periplasmic portion of the chain corresponds to 68–69 (DP). Residues 70–90 (AAVHLLSWAGAAYIVWLAWKI) form a helical membrane-spanning segment. The Cytoplasmic portion of the chain corresponds to 91–104 (ATSPTKEDGLQAKP). The helical transmembrane segment at 105-125 (ISFWASFALQFVNVKIILYGV) threads the bilayer. Residues 126 to 141 (TALSTFVLPQTQALSW) are Periplasmic-facing. Residues 142–162 (VVGVSVLLAMIGTFGNVCWAL) traverse the membrane as a helical segment. At 163–176 (AGHLFQRLFRQYGR) the chain is on the cytoplasmic side. A helical membrane pass occupies residues 177–194 (QLNIVLALLLVYCAVRIF). A topological domain (periplasmic) is located at residue tyrosine 195.

It belongs to the Rht family.

It is found in the cell inner membrane. It carries out the reaction O-acetyl-L-serine(in) = O-acetyl-L-serine(out). The catalysed reaction is L-cysteine(in) = L-cysteine(out). In terms of biological role, exporter of O-acetylserine (OAS) and cysteine. This chain is Cysteine/O-acetylserine efflux protein (eamB), found in Shigella flexneri serotype 5b (strain 8401).